The sequence spans 373 residues: MTVDLDQYAKPGKDYYLALGLEGSANKLGVGVIKHNLGQLSLDNRAEILSNVRDTYVTPPGEGFLPRDTARHHRNWAVRIIKKALIEAKVKGSDLDCICFTQGPGMGAPLQSVVIAARTLSQLWDLPLVGVNHCVGHIEMGREITGADNPVVLYVSGGNTQVIAYSRQRYRIFGETLDIAIGNCLDRFARTLRIPNEPAPGYNIEQMAKKGKHLVPLPYTVKGMDLSMSGILAHVDSLAKDLFAENKNKKLIDDETGEQITSEDLCFSLQETLFSMLVEITERAMAHVQSNQVLIVGGVGSNERLQQMMELMVNDRKNGSIFATDERFCIDNGIMIAHAGLLGYRMGQTNELWNTVCTQRFRTDEVFVKWRDD.

Residues histidine 133, histidine 137, and tyrosine 154 each contribute to the a divalent metal cation site. Substrate-binding positions include 154–158, aspartate 186, glycine 201, glutamate 205, and asparagine 302; that span reads YVSGG. Aspartate 331 provides a ligand contact to a divalent metal cation.

Belongs to the KAE1 / TsaD family. In terms of assembly, component of the EKC/KEOPS complex composed of at least BUD32, CGI121, GON7, KAE1 and PCC1; the whole complex dimerizes. It depends on a divalent metal cation as a cofactor.

The protein localises to the cytoplasm. It is found in the nucleus. It carries out the reaction L-threonylcarbamoyladenylate + adenosine(37) in tRNA = N(6)-L-threonylcarbamoyladenosine(37) in tRNA + AMP + H(+). Functionally, component of the EKC/KEOPS complex that is required for the formation of a threonylcarbamoyl group on adenosine at position 37 (t(6)A37) in tRNAs that read codons beginning with adenine. The complex is probably involved in the transfer of the threonylcarbamoyl moiety of threonylcarbamoyl-AMP (TC-AMP) to the N6 group of A37. KAE1 likely plays a direct catalytic role in this reaction, but requires other protein(s) of the complex to fulfill this activity. The EKC/KEOPS complex also promotes both telomere uncapping and telomere elongation. The complex is required for efficient recruitment of transcriptional coactivators. This is tRNA N6-adenosine threonylcarbamoyltransferase from Debaryomyces hansenii (strain ATCC 36239 / CBS 767 / BCRC 21394 / JCM 1990 / NBRC 0083 / IGC 2968) (Yeast).